The sequence spans 878 residues: Alanine--tRNA ligase (878 aa).

Zn(2+)-binding residues include His566, His570, Cys668, and His672.

It belongs to the class-II aminoacyl-tRNA synthetase family. Zn(2+) is required as a cofactor.

The protein resides in the cytoplasm. The catalysed reaction is tRNA(Ala) + L-alanine + ATP = L-alanyl-tRNA(Ala) + AMP + diphosphate. In terms of biological role, catalyzes the attachment of alanine to tRNA(Ala) in a two-step reaction: alanine is first activated by ATP to form Ala-AMP and then transferred to the acceptor end of tRNA(Ala). Also edits incorrectly charged Ser-tRNA(Ala) and Gly-tRNA(Ala) via its editing domain. This chain is Alanine--tRNA ligase, found in Bacillus velezensis (strain DSM 23117 / BGSC 10A6 / LMG 26770 / FZB42) (Bacillus amyloliquefaciens subsp. plantarum).